The following is a 441-amino-acid chain: MALNFKDKVVIVTGAGGGIGKVYALEFAKRGAKVVVNDLGGSHTGQGSSSKAADKVVEEIKAAGGTAVANYDSVEDGEKIVQTAMDSFGGVDILINNAGILRDVSFGKMTDGDWDLVYRVHAKGAYKLSRAAWNHMREKNFGRIIMTSSAAGLYGNFGQANYGSMKMALVGLSNTLAQEGKSKNIHCNTIAPIAASRLTESVMPPEILEQMKPDYIVPLVLYLCHQDTTETGGVFEVGAGWVSKVRLQRSAGVYMKDLTPEKIKDNWAQIESFDNPSYPTSASESVSGILAAVNSKPADGESVLVRPPKVAVPKALAATPSGSVVVDGYNASKIFTTIQGNIGAKGAELVKKINGIYLINIKKGTNTQAWALDLKNGSGSIVVGAGSTKPNVTITVSDEDFVDIMTGKLNAQSAFTKGKLKISGNMGLATKLGALMQGSKL.

Residues 1-302 are 3-hydroxyacyl-CoA dehydrogenase; sequence MALNFKDKVV…VNSKPADGES (302 aa). NAD(+) contacts are provided by residues 11–35, isoleucine 19, aspartate 38, 73–74, and asparagine 97; these read IVTGAGGGIGKVYALEFAKRGAKVV and SV. Serine 149 serves as a coordination point for substrate. The active-site Proton acceptor is tyrosine 162. NAD(+) is bound by residues 162-166 and 194-197; these read YGSMK and AASR. One can recognise an SCP2 domain in the interval 331–440; sequence ASKIFTTIQG…KLGALMQGSK (110 aa). Glutamine 412 contacts substrate.

This sequence belongs to the short-chain dehydrogenases/reductases (SDR) family.

It is found in the peroxisome. It catalyses the reaction a (3S)-3-hydroxyacyl-CoA + NAD(+) = a 3-oxoacyl-CoA + NADH + H(+). Its pathway is lipid metabolism; fatty acid beta-oxidation. Functionally, enzyme acting on the peroxisomal beta-oxidation pathway for fatty acids. Protects the cells from the increase of the harmful xenobiotic fatty acids incorporated from their diets and optimizes cellular lipid composition for proper development. This is Peroxisomal multifunctional enzyme A (mfeA) from Dictyostelium discoideum (Social amoeba).